We begin with the raw amino-acid sequence, 1016 residues long: Calmodulin-binding transcription activator 4 (1016 aa).

The CG-1 DNA-binding region spans 38–164 (ISTLYQEAHS…YRDVSEREEG (127 aa)). Residues 324–343 (KNGSGPSGGTGGSGDQGSES) form a disordered region. Residues 328–338 (GPSGGTGGSGD) show a composition bias toward gly residues. ANK repeat units lie at residues 647-676 (QEQGIIHMVAGLGFEWAFYPILAHGVNVDF), 680-709 (KGWSALHWAAQFGSEKMVAALIASGASAGA), and 719-748 (NGKTAASIAASNGHKGLAGYLSEVALTNHL). The tract at residues 753 to 786 (LEETENSKDTAQVQTEKTLNSISEQSPSGNEDQV) is disordered. A compositionally biased stretch (polar residues) spans 761-785 (DTAQVQTEKTLNSISEQSPSGNEDQ). 3 consecutive IQ domains span residues 798–827 (AAQAAARIQAAFRAHSFRKRKQREAALVAC), 855–884 (YNSAALSIQKNFRGYKDRKCFLELRQKVVK), and 878–907 (LRQKVVKIQAHVRGYQIRKNYKVICWAVRI). Residues 903–925 (WAVRILDKVVLRWRRKGVGLRGF) are calmodulin-binding. Phosphoserine is present on residues Ser935 and Ser962.

Belongs to the CAMTA family. As to expression, expressed in roots, stems, leaves, flowers and siliques.

The protein localises to the nucleus. Transcription activator that binds to the DNA consensus sequence 5'-[ACG]CGCG[GTC]-3'. Regulates transcriptional activity in response to calcium signals. Binds calmodulin in a calcium-dependent manner. Involved together with CAMTA2 and CAMTA3 in the positive regulation of a general stress response. The chain is Calmodulin-binding transcription activator 4 from Arabidopsis thaliana (Mouse-ear cress).